Here is a 1343-residue protein sequence, read N- to C-terminus: DNA-directed RNA polymerase subunit beta (1343 aa).

Belongs to the RNA polymerase beta chain family. As to quaternary structure, the RNAP catalytic core consists of 2 alpha, 1 beta, 1 beta' and 1 omega subunit. When a sigma factor is associated with the core the holoenzyme is formed, which can initiate transcription.

It carries out the reaction RNA(n) + a ribonucleoside 5'-triphosphate = RNA(n+1) + diphosphate. In terms of biological role, DNA-dependent RNA polymerase catalyzes the transcription of DNA into RNA using the four ribonucleoside triphosphates as substrates. In Shewanella denitrificans (strain OS217 / ATCC BAA-1090 / DSM 15013), this protein is DNA-directed RNA polymerase subunit beta.